The chain runs to 367 residues: DNA replication and repair protein RecF (367 aa).

30–37 provides a ligand contact to ATP; that stretch reads GNNGEGKT.

Belongs to the RecF family.

The protein localises to the cytoplasm. In terms of biological role, the RecF protein is involved in DNA metabolism; it is required for DNA replication and normal SOS inducibility. RecF binds preferentially to single-stranded, linear DNA. It also seems to bind ATP. The chain is DNA replication and repair protein RecF from Leptospira biflexa serovar Patoc (strain Patoc 1 / Ames).